The chain runs to 91 residues: Large ribosomal subunit protein eL34 (91 aa).

The tract at residues 48-69 is disordered; the sequence is RGRPVEMRKLPKTKKRPERPMP.

The protein belongs to the eukaryotic ribosomal protein eL34 family.

This chain is Large ribosomal subunit protein eL34 (rpl34e), found in Pyrococcus horikoshii (strain ATCC 700860 / DSM 12428 / JCM 9974 / NBRC 100139 / OT-3).